The sequence spans 120 residues: UPF0102 protein Pfl01_4685 (120 aa).

This sequence belongs to the UPF0102 family.

The sequence is that of UPF0102 protein Pfl01_4685 from Pseudomonas fluorescens (strain Pf0-1).